The sequence spans 248 residues: Anamorsin homolog (248 aa).

The interval 4–129 (FKGLQKTLYI…ETGSSARLSF (126 aa)) is N-terminal SAM-like domain. The tract at residues 130–161 (AKKDASALNVWKISGDDEELIDEEDLLDEEDK) is linker. [2Fe-2S] cluster is bound by residues cysteine 172, cysteine 181, cysteine 184, and cysteine 186. The fe-S binding site A stretch occupies residues 172-186 (CSTTGKRKACKNCSC). [4Fe-4S] cluster is bound by residues cysteine 209, cysteine 212, cysteine 220, and cysteine 223. 2 short sequence motifs (cx2C motif) span residues 209 to 212 (CGNC) and 220 to 223 (CSTC). The segment at 209 to 223 (CGNCYLGDAFRCSTC) is fe-S binding site B.

Belongs to the anamorsin family. Monomer. It depends on [2Fe-2S] cluster as a cofactor. The cofactor is [4Fe-4S] cluster.

It localises to the cytoplasm. The protein resides in the mitochondrion intermembrane space. In terms of biological role, component of the cytosolic iron-sulfur (Fe-S) protein assembly (CIA) machinery. Required for the maturation of extramitochondrial Fe-S proteins. Part of an electron transfer chain functioning in an early step of cytosolic Fe-S biogenesis, facilitating the de novo assembly of a [4Fe-4S] cluster on the cytosolic Fe-S scaffold complex. Electrons are transferred from NADPH via a FAD- and FMN-containing diflavin oxidoreductase. Together with the diflavin oxidoreductase, also required for the assembly of the diferric tyrosyl radical cofactor of ribonucleotide reductase (RNR), probably by providing electrons for reduction during radical cofactor maturation in the catalytic small subunit. This Drosophila ananassae (Fruit fly) protein is Anamorsin homolog.